The following is a 203-amino-acid chain: Small ribosomal subunit protein uS4c (203 aa).

The segment at 19–43 (PGLTNKSPKAGSDLRKQPRSRKKSQ) is disordered. In terms of domain architecture, S4 RNA-binding spans 89-152 (MRLDNILFRL…KSRTLIQNSL (64 aa)).

The protein belongs to the universal ribosomal protein uS4 family. As to quaternary structure, part of the 30S ribosomal subunit. Contacts protein S5. The interaction surface between S4 and S5 is involved in control of translational fidelity.

The protein localises to the plastid. Its subcellular location is the chloroplast. Its function is as follows. One of the primary rRNA binding proteins, it binds directly to 16S rRNA where it nucleates assembly of the body of the 30S subunit. In terms of biological role, with S5 and S12 plays an important role in translational accuracy. The sequence is that of Small ribosomal subunit protein uS4c (rps4) from Jasminum nudiflorum (Winter jasmine).